Consider the following 279-residue polypeptide: Large ribosomal subunit protein uL2 (279 aa).

Disordered stretches follow at residues 33–58 (LLAP…GGGH) and 223–279 (GVAM…RKRG). 2 stretches are compositionally biased toward basic residues: residues 40 to 58 (KGGR…GGGH) and 269 to 279 (VRRRYATRKRG).

The protein belongs to the universal ribosomal protein uL2 family. As to quaternary structure, part of the 50S ribosomal subunit. Forms a bridge to the 30S subunit in the 70S ribosome.

Its function is as follows. One of the primary rRNA binding proteins. Required for association of the 30S and 50S subunits to form the 70S ribosome, for tRNA binding and peptide bond formation. It has been suggested to have peptidyltransferase activity; this is somewhat controversial. Makes several contacts with the 16S rRNA in the 70S ribosome. This Salinispora arenicola (strain CNS-205) protein is Large ribosomal subunit protein uL2.